Here is a 427-residue protein sequence, read N- to C-terminus: 11-beta-hydroxysteroid dehydrogenase type 2 (427 aa).

82-111 serves as a coordination point for NAD(+); sequence TRAVLITGCDSGFGNATAKKLDAMGFTVLA. S219 contributes to the substrate binding site. Y232 (proton acceptor) is an active-site residue.

This sequence belongs to the short-chain dehydrogenases/reductases (SDR) family. In terms of assembly, interacts with ligand-free cytoplasmic NR3C2. Highly expressed in the kidney and adrenal and at lower levels in the colon.

Its subcellular location is the microsome. The protein localises to the endoplasmic reticulum. It carries out the reaction an 11beta-hydroxysteroid + NAD(+) = an 11-oxosteroid + NADH + H(+). The catalysed reaction is corticosterone + NAD(+) = 11-dehydrocorticosterone + NADH + H(+). It catalyses the reaction cortisol + NAD(+) = cortisone + NADH + H(+). The enzyme catalyses 11beta,17beta-dihydroxyandrost-4-ene-3-one + NAD(+) = 17beta-hydroxyandrost-4-ene-3,11-dione + NADH + H(+). It carries out the reaction 11beta-hydroxyandrost-4-ene-3,17-dione + NAD(+) = androst-4-ene-3,11,17-trione + NADH + H(+). It participates in steroid metabolism. With respect to regulation, inhibited by glycyrrhetinic acid, carbenoloxone, 11-alpha-OH-progesterone and 11-beta-OH-progesterone. In terms of biological role, catalyzes the conversion of biologically active 11beta-hydroxyglucocorticoids (11beta-hydroxysteroid) such as cortisol, to inactive 11-ketoglucocorticoids (11-oxosteroid) such as cortisone, in the presence of NAD(+). Functions as a dehydrogenase (oxidase), thereby decreasing the concentration of active glucocorticoids, thus protecting the nonselective mineralocorticoid receptor from occupation by glucocorticoids. Plays an important role in maintaining glucocorticoids balance during preimplantation and protects the fetus from excessive maternal corticosterone exposure. Catalyzes the oxidation of 11beta-hydroxytestosterone (11beta,17beta-dihydroxyandrost-4-ene-3-one) to 11-ketotestosterone (17beta-hydroxyandrost-4-ene-3,11-dione), a major bioactive androgen. Catalyzes the conversion of 11beta-hydroxyandrostenedione (11beta-hydroxyandrost-4-ene-3,17-dione) to 11-ketoandrostenedione (androst-4-ene-3,11,17-trione), which can be further metabolized to 11-ketotestosterone. Converts 7-beta-25-dihydroxycholesterol to 7-oxo-25-hydroxycholesterol in vitro. 7-beta-25-dihydroxycholesterol (not 7-oxo-25-hydroxycholesterol) acts as a ligand for the G-protein-coupled receptor (GPCR) Epstein-Barr virus-induced gene 2 (EBI2) and may thereby regulate immune cell migration. May protect ovulating oocytes and fertilizing spermatozoa from the adverse effects of cortisol. This Ovis aries (Sheep) protein is 11-beta-hydroxysteroid dehydrogenase type 2 (HSD11B2).